We begin with the raw amino-acid sequence, 133 residues long: Nickel-responsive regulator (133 aa).

Positions 76, 87, 89, and 95 each coordinate Ni(2+).

This sequence belongs to the transcriptional regulatory CopG/NikR family. As to quaternary structure, homotetramer. Ni(2+) is required as a cofactor.

In terms of biological role, transcriptional repressor of the nikABCDE operon. Is active in the presence of excessive concentrations of intracellular nickel. The sequence is that of Nickel-responsive regulator from Escherichia coli O6:K15:H31 (strain 536 / UPEC).